The sequence spans 287 residues: Glycine--tRNA ligase alpha subunit (287 aa).

This sequence belongs to the class-II aminoacyl-tRNA synthetase family. In terms of assembly, tetramer of two alpha and two beta subunits.

The protein resides in the cytoplasm. The enzyme catalyses tRNA(Gly) + glycine + ATP = glycyl-tRNA(Gly) + AMP + diphosphate. This Petrotoga mobilis (strain DSM 10674 / SJ95) protein is Glycine--tRNA ligase alpha subunit.